Here is a 418-residue protein sequence, read N- to C-terminus: Serine hydroxymethyltransferase (418 aa).

Residues leucine 118 and 122-124 contribute to the (6S)-5,6,7,8-tetrahydrofolate site; that span reads GHL. Residue lysine 227 is modified to N6-(pyridoxal phosphate)lysine. A (6S)-5,6,7,8-tetrahydrofolate-binding site is contributed by glutamate 242.

It belongs to the SHMT family. Homodimer. The cofactor is pyridoxal 5'-phosphate.

The protein resides in the cytoplasm. It carries out the reaction (6R)-5,10-methylene-5,6,7,8-tetrahydrofolate + glycine + H2O = (6S)-5,6,7,8-tetrahydrofolate + L-serine. It functions in the pathway one-carbon metabolism; tetrahydrofolate interconversion. The protein operates within amino-acid biosynthesis; glycine biosynthesis; glycine from L-serine: step 1/1. Functionally, catalyzes the reversible interconversion of serine and glycine with tetrahydrofolate (THF) serving as the one-carbon carrier. This reaction serves as the major source of one-carbon groups required for the biosynthesis of purines, thymidylate, methionine, and other important biomolecules. Also exhibits THF-independent aldolase activity toward beta-hydroxyamino acids, producing glycine and aldehydes, via a retro-aldol mechanism. The polypeptide is Serine hydroxymethyltransferase (Chloroflexus aggregans (strain MD-66 / DSM 9485)).